We begin with the raw amino-acid sequence, 488 residues long: MQQTRTEAVAGAFSRCLGFCGMRLGLLLLARHWCIAGVFPQKFDGDSAYVGMSDGNPELLSTSQTYNGQSENNEDYEIPPITPPNLPEPSLLHLGDHEASYHSLCHGLTPNGLLPAYSYQAMDLPAIMVSNMLAQDSHLLSGQLPTIQEMVHSEVAAYDSGRPGPLLGRPAMLASHMSALSQSQLISQMGIRSSIAHSSPSPPGSKSATPSPSSSTQEEESEVHFKISGEKRPSADPGKKAKNPKKKKKKDPNEPQKPVSAYALFFRDTQAAIKGQNPSATFGDVSKIVASMWDSLGEEQKQSSPDQGETKSTQANPPAKMLPPKQPMYAMPGLASFLTPSDLQAFRSGASPASLARTLGSKSLLPGLSASPPPPPSFPLSPTLHQQLSLPPHAQGALLSPPVSMSPAPQPPVLPTPMALQVQLAMSPSPPGPQDFPHISEFPSSSGSCSPGPSNPTSSGDWDSSYPSGECGISTCSLLPRDKSLYLT.

The tract at residues 76-114 (YEIPPITPPNLPEPSLLHLGDHEASYHSLCHGLTPNGLL) is required for transcriptional activation. Disordered regions lie at residues 192-258 (RSSI…PQKP), 293-328 (WDSL…KQPM), and 363-473 (SLLP…ECGI). Positions 204–216 (GSKSATPSPSSST) are enriched in low complexity. Residues 222–239 (EVHFKISGEKRPSADPGK) are compositionally biased toward basic and acidic residues. A Nuclear localization signal motif is present at residues 223-252 (VHFKISGEKRPSADPGKKAKNPKKKKKKDP). Basic residues predominate over residues 240 to 250 (KAKNPKKKKKK). Positions 255-323 (PQKPVSAYAL…QANPPAKMLP (69 aa)) form a DNA-binding region, HMG box. Residues 302–316 (QSSPDQGETKSTQAN) are compositionally biased toward polar residues. A compositionally biased stretch (low complexity) spans 443 to 460 (PSSSGSCSPGPSNPTSSG).

The protein localises to the nucleus. Its function is as follows. Putative transcriptional activator involved in the hypothalamo-pituitary-gonadal system. This is TOX high mobility group box family member 2 (TOX2) from Homo sapiens (Human).